We begin with the raw amino-acid sequence, 298 residues long: Transcription factor RAX2 (298 aa).

2 consecutive HTH myb-type domains span residues 9–62 (KANV…LNYL) and 63–117 (RPNI…KKKL). 2 DNA-binding regions (H-T-H motif) span residues 38–62 (WIALPHKAGLRRCGKSCRLRWLNYL) and 90–113 (WSVIAAHLQGRTDNDIKNYWNTKL).

As to expression, ubiquitous, with higher levels in roots, flowers, and shoot tips. Found in all cells of the shoot tips.

It localises to the nucleus. Transcription activator. Positively regulates axillary meristems (AMs) formation and development, especially during inflorescence. This Arabidopsis thaliana (Mouse-ear cress) protein is Transcription factor RAX2 (RAX2).